The primary structure comprises 370 residues: Cytochrome b (370 aa).

4 helical membrane-spanning segments follow: residues 25 to 45 (FGSM…FLAV), 69 to 90 (WMMQ…YIHI), 105 to 125 (WLSG…GYVL), and 170 to 190 (FFAL…LHIL). Residues His75 and His89 each contribute to the heme b site. Residues His174 and His188 each coordinate heme b. Residue His193 coordinates a ubiquinone. 4 helical membrane passes run 218-238 (YKDM…VSFF), 280-300 (LGGA…PFTH), 312-332 (LMQL…WTAT), and 339-358 (FTTI…ISNP).

It belongs to the cytochrome b family. As to quaternary structure, the cytochrome bc1 complex contains 3 respiratory subunits (MT-CYB, CYC1 and UQCRFS1), 2 core proteins (UQCRC1 and UQCRC2) and probably 6 low-molecular weight proteins. The cofactor is heme b.

The protein localises to the mitochondrion inner membrane. Component of the ubiquinol-cytochrome c reductase complex (complex III or cytochrome b-c1 complex) that is part of the mitochondrial respiratory chain. The b-c1 complex mediates electron transfer from ubiquinol to cytochrome c. Contributes to the generation of a proton gradient across the mitochondrial membrane that is then used for ATP synthesis. The chain is Cytochrome b (MT-CYB) from Chilabothrus striatus (Haitian boa constrictor).